We begin with the raw amino-acid sequence, 577 residues long: Cryptochrome DASH, chloroplastic/mitochondrial (577 aa).

The transit peptide at 1–53 (MIKQPFLLTKFTPFSSKSKHTLFTFHCNFSIKMASLTARTTPTVQNVPGLTPE) directs the protein to the chloroplast and mitochondrion. One can recognise a Photolyase/cryptochrome alpha/beta domain in the interval 78–219 (GVAIVWFRND…GNDPGSGNTT (142 aa)). Residues 550-577 (TKKTGDSKTAFSSRRGRPEDNRRKRHGY) form a disordered region.

It belongs to the DNA photolyase class-1 family. FAD serves as cofactor. (6R)-5,10-methylene-5,6,7,8-tetrahydrofolate is required as a cofactor. In terms of tissue distribution, expressed in the endosperm and embryo 96 hours after seed imbibition. In the embryo, detected in the root meristem, the root cap, the shoot apical meristem and the epidermis of cotyledons. In adult plants, detcted in roots, the whole leaf lamina, the stem and in glandular trichomes.

The protein resides in the plastid. It is found in the chloroplast. The protein localises to the mitochondrion. In terms of biological role, may have a photoreceptor function and might bind ss- and ds-DNA in a sequence non-specific manner. Lacks photolyase activity. Has a potential role in detecting the dawn and dusk transitions and, consequently, in circadian input pathways. The polypeptide is Cryptochrome DASH, chloroplastic/mitochondrial (Solanum lycopersicum (Tomato)).